Consider the following 145-residue polypeptide: NADH-quinone oxidoreductase subunit A (145 aa).

3 consecutive transmembrane segments (helical) span residues 14-34 (FAVF…GGFL), 66-86 (FYLV…LYAW), and 96-116 (VGFI…VYLV).

The protein belongs to the complex I subunit 3 family. As to quaternary structure, NDH-1 is composed of 13 different subunits. Subunits NuoA, H, J, K, L, M, N constitute the membrane sector of the complex.

The protein resides in the cell inner membrane. It carries out the reaction a quinone + NADH + 5 H(+)(in) = a quinol + NAD(+) + 4 H(+)(out). NDH-1 shuttles electrons from NADH, via FMN and iron-sulfur (Fe-S) centers, to quinones in the respiratory chain. The immediate electron acceptor for the enzyme in this species is believed to be ubiquinone. Couples the redox reaction to proton translocation (for every two electrons transferred, four hydrogen ions are translocated across the cytoplasmic membrane), and thus conserves the redox energy in a proton gradient. The polypeptide is NADH-quinone oxidoreductase subunit A (Sodalis glossinidius (strain morsitans)).